The primary structure comprises 284 residues: MFKKFKPVTPGTRQLILPSFDELTTQGELEGSSSKRSVRPNKKLSFFKKSSGGRDNLGHISCRHRGGGVRRHYRVIDFKRNKDGVEAKVASVEYDPNRSAYIALLNYVDGEKRYILAPKGIKRGDRVISGEGSPFKTGCCMTLKSIPLGISVHNVEMRPGSGGKLVRSAGLSAQIIAKTDGYVTLKMPSGEFRMLNEMCRATVGEVSNADHNLCVDGKAGRRRWKGIRPTVRGTAMNPVDHPHGGGEGRHNGYISQTPWGKVTKGLKTRDKRKSNKWIVKDRRK.

Disordered regions lie at residues 28-50 (ELEG…FKKS) and 232-284 (RGTA…DRRK). Basic residues predominate over residues 36–46 (RSVRPNKKLSF). Over residues 240–250 (DHPHGGGEGRH) the composition is skewed to basic and acidic residues. Residues 264–284 (KGLKTRDKRKSNKWIVKDRRK) are compositionally biased toward basic residues.

It belongs to the universal ribosomal protein uL2 family. Part of the 50S ribosomal subunit. Forms a bridge to the 30S subunit in the 70S ribosome.

Functionally, one of the primary rRNA binding proteins. Required for association of the 30S and 50S subunits to form the 70S ribosome, for tRNA binding and peptide bond formation. It has been suggested to have peptidyltransferase activity; this is somewhat controversial. Makes several contacts with the 16S rRNA in the 70S ribosome. This is Large ribosomal subunit protein uL2 from Chlamydia muridarum (strain MoPn / Nigg).